Reading from the N-terminus, the 457-residue chain is G-protein coupled receptor 135 (457 aa).

Residues 1–26 are disordered; that stretch reads MEEQARPPGRPAASATLQGSAHPGGA. Residues 1-64 lie on the Extracellular side of the membrane; it reads MEEQARPPGR…EAAGSRGPAP (64 aa). N-linked (GlcNAc...) asparagine glycosylation occurs at Asn-47. The chain crosses the membrane as a helical span at residues 65-85; it reads LLWHGAAVAAQALVLLLIFLL. The Cytoplasmic portion of the chain corresponds to 86–109; the sequence is SSLGNCAVMGVIVKHRQLRTVTNA. A helical membrane pass occupies residues 110–130; it reads FILSLSLSDLLTALLCLPAAF. Over 131–156 the chain is Extracellular; sequence LDLFAPPGDSGPWRSFCAASRFFSSC. A helical transmembrane segment spans residues 157 to 177; the sequence is FGIVSTFSVALISLDRYCAIV. The Cytoplasmic segment spans residues 178–189; that stretch reads RPPRDKLGRRRA. The chain crosses the membrane as a helical span at residues 190 to 210; the sequence is LQLLAGAWLAALGFSLPWDLL. Over 211 to 235 the chain is Extracellular; the sequence is RAPREPPAPQSFHRCLYRTSPDPAQ. The helical transmembrane segment at 236 to 256 threads the bilayer; the sequence is LGVAYSVGLVVACYLLPFLLM. At 257 to 295 the chain is on the cytoplasmic side; the sequence is CFCRYHICKTVRLSDVRVRPMTTYARVLRFFSEVRTATT. The chain crosses the membrane as a helical span at residues 296-316; the sequence is VLIMIIFVMCCWGPYCFLVLL. The Extracellular portion of the chain corresponds to 317-329; sequence AATRQGQATQAPS. A helical membrane pass occupies residues 330–350; it reads LLNVAAVWLTWANGAINPVIY. Over 351 to 457 the chain is Cytoplasmic; that stretch reads AIRNPNISML…HNSETRDSSI (107 aa).

The protein belongs to the G-protein coupled receptor 1 family. As to quaternary structure, interacts with MTNR1B. Interacts with ARRB1 and ARRB2 in a spontaneous and agonist-independent manner; leading to the internalization of GPR135 in the endosomal compartment.

It is found in the cell membrane. It localises to the endosome membrane. Functionally, orphan receptor. Has spontaneous activity for beta-arrestin recruitment. Shows a reciprocal regulatory interaction with the melatonin receptor MTNR1B most likely through receptor heteromerization. The sequence is that of G-protein coupled receptor 135 (Gpr135) from Mus musculus (Mouse).